Consider the following 549-residue polypeptide: Cation/acetate symporter ActP (549 aa).

At 1 to 32 (MKRVLTALAATLPFAANAADAISGAVERQPTN) the chain is on the periplasmic side. The helical transmembrane segment at 33-55 (WQAIIMFLIFVVFTLGITYWASK) threads the bilayer. At 56 to 75 (RVRSRNDYYTAGGNITGFQN) the chain is on the cytoplasmic side. A helical transmembrane segment spans residues 76–98 (GLAIAGDYMSAASFLGISALVFT). Residues 99–102 (SGYD) are Periplasmic-facing. The chain crosses the membrane as a helical span at residues 103–125 (GLIYSLGFLVGWPIILFLIAERL). The Cytoplasmic segment spans residues 126–145 (RNLGRYTFADVASYRLKQGP). Residues 146 to 168 (IRILSACGSLVVVALYLIAQMVG) traverse the membrane as a helical segment. Residues 169–182 (AGKLIELLFGLNYH) are Periplasmic-facing. Residues 183 to 205 (IAVVLVGVLMMMYVLFGGMLATT) traverse the membrane as a helical segment. Residues 206-211 (WVQIIK) are Cytoplasmic-facing. The helical transmembrane segment at 212–234 (AVLLLFGASFMAFMVMKHVGFSF) threads the bilayer. At 235–263 (NNLFSEAMAVHPKGVDIMKPGGLVKDPIS) the chain is on the periplasmic side. The chain crosses the membrane as a helical span at residues 264–286 (ALSLGLGLMFGTAGLPHILMHFF). The Cytoplasmic portion of the chain corresponds to 287 to 297 (TVSDAREARKS). The chain crosses the membrane as a helical span at residues 298-320 (VFYATGFMGYFYILTFIIGFGAI). Over 321–358 (MLVGANPEYKDAAGHLIGGNNMAAVHLANAVGGNLFLG) the chain is Periplasmic. The helical transmembrane segment at 359-381 (FISAVAFATILAVVAGLTLAGAS) threads the bilayer. The Cytoplasmic segment spans residues 382 to 401 (AVSHDLYANVFKKGATEREE). Residues 402–424 (LRVSKITVLILGVIAIILGVLFE) traverse the membrane as a helical segment. Over 425–427 (NQN) the chain is Periplasmic. A helical membrane pass occupies residues 428–450 (IAFMVGLAFAIAASCNFPIILLS). Topologically, residues 451-461 (MYWSKLTTRGA) are cytoplasmic. A helical transmembrane segment spans residues 462–484 (MLGGWLGLITAVVLMILGPTIWV). Over 485-493 (QILGHEKAI) the chain is Periplasmic. The chain crosses the membrane as a helical span at residues 494-516 (FPYEYPALFSISVAFLGIWLFSA). The Cytoplasmic portion of the chain corresponds to 517–549 (TDNSAEGARERELFRAQFIRSQTGFGVEQGRAH).

This sequence belongs to the sodium:solute symporter (SSF) (TC 2.A.21) family.

The protein resides in the cell inner membrane. Functionally, transports acetate. The chain is Cation/acetate symporter ActP (actP) from Escherichia coli O6:H1 (strain CFT073 / ATCC 700928 / UPEC).